Consider the following 589-residue polypeptide: Ubiquilin-1 (589 aa).

A compositionally biased stretch (gly residues) spans 1–11 (MAESGESGGPP). Disordered stretches follow at residues 1–35 (MAES…AEPK) and 110–145 (NRPQ…ATSN). A2 bears the N-acetylalanine mark. The segment covering 12–35 (GSQDSAAGAEGAGAPAAAASAEPK) has biased composition (low complexity). The region spanning 37 to 111 (MKVTVKTPKE…VHLVIKTQNR (75 aa)) is the Ubiquitin-like domain. Residues 110–124 (NRPQDHSAQQTNTAG) are compositionally biased toward polar residues. A compositionally biased stretch (low complexity) spans 125–145 (SNVTTSSTPNSNSTSGSATSN). The interaction with UBXN4 stretch occupies residues 178-428 (QLLSNPEMMV…LNNPLFAGNP (251 aa)). 2 consecutive STI1 domains span residues 182 to 210 (NPEM…QLIM) and 212 to 251 (NPQM…MQEM). The tract at residues 295 to 371 (PFASLVSNTS…NLVPGVGASM (77 aa)) is disordered. Polar residues predominate over residues 299–313 (LVSNTSSGEGSQPSR). The span at 327–360 (QTSQSSSASSGTASTVGGTTGSTASGTSGQSTTA) shows a compositional bias: low complexity. STI1 domains lie at 387–434 (NPQL…QEQM) and 438–470 (LPTF…QQGL). Residues 488-520 (LGALGSTGGSSGTNGSNATPSENTSPTAGTTEP) form a disordered region. The segment covering 489–499 (GALGSTGGSSG) has biased composition (gly residues). Over residues 509 to 520 (ENTSPTAGTTEP) the composition is skewed to polar residues. A UBA domain is found at 546–586 (RFQQQLEQLSAMGFLNREANLQALIATGGDINAAIERLLGS).

As to quaternary structure, monomer and homodimer. Heterodimer with UBQLN2. Binds CD47, NBL1, GABRA1, GABRA2, GABRA3, GABRA6, GABRB1, GABRB2 and GABRB3. Binds UBE3A, BTRC, P4HB and MTOR. Interacts with the proteasome 19S subunit. Interacts (via ubiquitin-like domain) with TREX1; the interaction is direct and may control TREX1 subcellular location. Forms a complex with UBXN4 and VCP. Interacts (via UBA domain) with UBQLN4 (via ubiquitin-like domain). Found in a complex with UBQLN2 and MAP1LC3A/B/C. The monomeric form interacts with PSEN2. The monomeric form interacts with PSEN1. Interacts with ORAI1. Interacts (via UBA domain) with TICAM1. Interacts with EPS15. Interacts (via UBA domain) with UBA52 and (via ubiquitin-like domain) with PSMD3 and PSMD4. Interacts with HERPUD1. Interacts with MAP1LC3A/B/C in the presence of UBQLN4. Interacts (via ubiquitin-like domain) with EPS15 (via UIM domains) and both the ubiquitinated and non-ubiquitinated forms can interact with EPS15. Interacts (via ubiquitin-like domain) with EPS15L1, HGS (via UIM domain) and STAM2 (via UIM domain). Interacts with BCL2L10/BCL-B; in the cytoplasm. In terms of assembly, monomeric form interacts with PSEN1. In terms of processing, degraded during both macroautophagy and during chaperone-mediated autophagy (CMA). Post-translationally, phosphorylated. Ubiquitinated. Brain (at protein level). Ubiquitous. Highly expressed throughout the brain; detected in neurons and in neuropathological lesions, such as neurofibrillary tangles and Lewy bodies. Highly expressed in heart, placenta, pancreas, lung, liver, skeletal muscle and kidney.

The protein resides in the cytoplasm. It is found in the nucleus. It localises to the endoplasmic reticulum. Its subcellular location is the cytoplasmic vesicle. The protein localises to the autophagosome. The protein resides in the cell membrane. Functionally, plays an important role in the regulation of different protein degradation mechanisms and pathways including ubiquitin-proteasome system (UPS), autophagy and endoplasmic reticulum-associated protein degradation (ERAD) pathway. Mediates the proteasomal targeting of misfolded or accumulated proteins for degradation by binding (via UBA domain) to their polyubiquitin chains and by interacting (via ubiquitin-like domain) with the subunits of the proteasome. Plays a role in the ERAD pathway via its interaction with ER-localized proteins UBXN4, VCP and HERPUD1 and may form a link between the polyubiquitinated ERAD substrates and the proteasome. Involved in the regulation of macroautophagy and autophagosome formation; required for maturation of autophagy-related protein LC3 from the cytosolic form LC3-I to the membrane-bound form LC3-II and may assist in the maturation of autophagosomes to autolysosomes by mediating autophagosome-lysosome fusion. Negatively regulates the TICAM1/TRIF-dependent toll-like receptor signaling pathway by decreasing the abundance of TICAM1 via the autophagic pathway. Promotes the ubiquitination and lysosomal degradation of ORAI1, consequently down-regulating the ORAI1-mediated Ca2+ mobilization. Suppresses the maturation and proteasomal degradation of amyloid beta A4 protein (A4) by stimulating the lysine 63 (K63)-linked polyubiquitination. Delays the maturation of A4 by sequestering it in the Golgi apparatus and preventing its transport to the cell surface for subsequent processing. Ubiquitinates BCL2L10 and thereby stabilizes protein abundance. Its function is as follows. Plays a role in unfolded protein response (UPR) by attenuating the induction of UPR-inducible genes, DDTI3/CHOP, HSPA5 and PDIA2 during ER stress. Plays a key role in the regulation of the levels of PSEN1 by targeting its accumulation to aggresomes which may then be removed from cells by autophagocytosis. Plays a role in unfolded protein response (UPR) by attenuating the induction of UPR-inducible genes, DDTI3/CHOP, HSPA5 and PDIA2 during ER stress. This is Ubiquilin-1 (UBQLN1) from Homo sapiens (Human).